The following is a 319-amino-acid chain: Inactive hydroxysteroid dehydrogenase-like protein 1 (319 aa).

Positions 2 to 82 are required for mitochondria translocation; sequence AAVDSFQLLY…CGASEAIAKA (81 aa). NADP(+) contacts are provided by residues 74–80, lysine 99, and aspartate 125; that span reads GASEAIA.

This sequence belongs to the short-chain dehydrogenases/reductases (SDR) family. 17-beta-HSD 3 subfamily.

The protein localises to the mitochondrion. In Danio rerio (Zebrafish), this protein is Inactive hydroxysteroid dehydrogenase-like protein 1 (hsdl1).